The chain runs to 319 residues: MTYARIAKSSRYLSEFAVSNDDLSQIMETSDEWIKTRTGISSRRISQQENTSDLAIQVAKQLLAGEDPAGVDLIIVATMSPDAYTPATAALVQAAVGAENAACFDLSAACSGFVYALDVAEKMLRRPGGMALVIGAETLSKLVDWQDRTTAVLFGDGAGGVLVKNDALEPHFLASQLKSYGHLAKFLSAGQTSPQPFPGPVTDLAPFKMNGREVYKFATHKVPEVITACLEEAGVGLAEVDLFLLHQANYRIVKQVARRLDLPEEKFPCNIAEYGNTSAASEAILLAELAEEGKAQAGDLVVLAGFGGGLTAAAQLVRL.

Catalysis depends on residues Cys110 and His246. An ACP-binding region spans residues 247–251; the sequence is QANYR. Asn276 is an active-site residue.

Belongs to the thiolase-like superfamily. FabH family. Homodimer.

It is found in the cytoplasm. The catalysed reaction is malonyl-[ACP] + acetyl-CoA + H(+) = 3-oxobutanoyl-[ACP] + CO2 + CoA. Its pathway is lipid metabolism; fatty acid biosynthesis. Functionally, catalyzes the condensation reaction of fatty acid synthesis by the addition to an acyl acceptor of two carbons from malonyl-ACP. Catalyzes the first condensation reaction which initiates fatty acid synthesis and may therefore play a role in governing the total rate of fatty acid production. Possesses both acetoacetyl-ACP synthase and acetyl transacylase activities. Its substrate specificity determines the biosynthesis of branched-chain and/or straight-chain of fatty acids. The polypeptide is Beta-ketoacyl-[acyl-carrier-protein] synthase III (Lactobacillus delbrueckii subsp. bulgaricus (strain ATCC 11842 / DSM 20081 / BCRC 10696 / JCM 1002 / NBRC 13953 / NCIMB 11778 / NCTC 12712 / WDCM 00102 / Lb 14)).